The primary structure comprises 2176 residues: MEPTDSTNEQLGDTKTAAVKEESRSFLGIDLNEIPTGATLGGGCTAGQDDDGEYEPVEVVRSIHDNPDPAPGAPAEVPEPDRDASCGACGRPESIELVVVCDACERGFHMSCVNDGVEAAPSADWMCSDCRTGGERSKLWPLGVKSKLILDMNASPPSDAEGYGAEETSDSRKHMLASSSCIGNSFDYAMMHSSFSSLGRGHASLEASGLMSRNTKMSMDALGSHNLGFGFPLNLNNSSLPMRFPSLDPSELFLQNLRHFISERHGVLEDGWRVEFRQPLNGYQLCAVYCAPNGKTFSSIQEVACYLGLAINGNYSCMDAEIRNENSLLQERLHTPKRRKTSRWPNNGFPEQKGSSVSAQLRRFPFNGQTMSPFAVKSGTHFQAGGSLSSGNNGCGCEEAKNGCPMQFEDFFVLSLGRIDIRQSYHNVNVIYPIGYKSCWHDKITGSLFTCEVSDGNSGPIFKVTRSPCSKSFIPAGSTVFSCPKIDEMVEQNSDKLSNRRDSTQERDDDASVEILLSEHCPPLGDDILSCLREKSFSKTVNSLRSEVDSSRVDFDKNLSYDQDHGVEIGDIVVEEDSLSDAWKKVSQKLVDACSIVLKQKGTLNFLCKHVDRETSEINWDTMNEKDNVILSLSKFCCSLAPCSVTCGEKDKSEFAAVVDALSRWLDQNRFGLDADFVQEMIEHMPGAESCTNYRTLKSRSSSSVPITVAEGALVVKPKGGENVKDEVFGEISRKAKKPKLNGGHGVRNLHPPPGRPMCLRLPPGLVGDFLQVSEVFWRFHEILGFEEAFSPENLEQELINPVFDGLFLDKPGKDDKRSEINFTDKDSTATKLFSLFDESRQPFPAKNTSASELKEKKAGDSSDFKISDSSRGSCVGALLTRAHISLLQVLICELQSKVAAFVDPNFDSGESRSRRGRKKDDSTLSAKRNKLHMLPVNEFTWPELARRYILSLLSMDGNLESAEIAARESGKVFRCLQGDGGLLCGSLTGVAGMEADSMLLAEAIKKISGSLTSENDVLSVEDDDSDGLDATETNTCSGDIPEWAQVLEPVKKLPTNVGTRIRKCVYEALERNPPEWAKKILEHSISKEIYKGNASGPTKKAVLSLLADIRGGDLVQRSIKGTKKRTYISVSDVIMKKCRAVLRGVAAADEDKVLCTLLGRKLLNSSDNDDDGLLGSPAMVSRPLDFRTIDLRLAAGAYDGSTEAFLEDVLELWSSIRVMYADQPDCVDLVATLSEKFKSLYEAEVVPLVQKLKDYRKLECLSAEMKKEIKDIVVSVNKLPKAPWDEGVCKVCGVDKDDDSVLLCDTCDAEYHTYCLNPPLIRIPDGNWYCPSCVIAKRMAQEALESYKLVRRRKGRKYQGELTRASMELTAHLADVMEEKDYWEFSAEERILLLKLLCDELLSSSLVHQHLEQCAEAIIEMQQKLRSLSSEWKNAKMRQEFLTAKLAKVEPSILKEVGEPHNSSYFADQMGCDPQPQEGVGDGVTRDDETSSTAYLNKNQGKSPLETDTQPGESHVNFGESKISSPETISSPGRHELPIADTSPLVTDNLPEKDTSETLLKSVGRNHETHSPNSNAVELPTAHDASSQASQELQACQQDLSATSNEIQNLQQSIRSIESQLLKQSIRRDFLGTDASGRLYWGCCFPDENPRILVDGSISLQKPVQADLIGSKVPSPFLHTVDHGRLRLSPWTYYETETEISELVQWLHDDDLKERDLRESILWWKRLRYGDVQKEKKQAQNLSAPVFATGLETKAAMSMEKRYGPCIKLEMETLKKRGKKTKVAEREKLCRCECLESILPSMIHCLICHKTFASDDEFEDHTESKCIPYSLATEEGKDISDSSKAKESLKSDYLNVKSSAGKDVAEISNVSELDSGLIRYQEEESISPYHFEEICSKFVTKDCNRDLVKEIGLISSNGIPTFLPSSSTHLNDSVLISAKSNKPDGGDSGDQVIFAGPETNVEGLNSESNMSFDRSVTDSHGGPLDKPSGLGFGFSEQKNKKSSGSGLKSCCVVPQAALKRVTGKALPGFRFLKTNLLDMDVALPEEALRPSKSHPNRRRAWRVFVKSSQSIYELVQATIVVEDMIKTEYLKNEWWYWSSLSAAAKISTLSALSVRIFSLDAAIIYDKPITPSNPIDETKPIISLPDQKSQPVSDSQERSSRVRRSGKKRKEPEGS.

Residues 1–13 (MEPTDSTNEQLGD) are compositionally biased toward polar residues. Disordered stretches follow at residues 1 to 20 (MEPTDSTNEQLGDTKTAAVK) and 28 to 85 (GIDL…RDAS). The PHD-type 1 zinc finger occupies 83 to 133 (DASCGACGRPESIELVVVCDACERGFHMSCVNDGVEAAPSADWMCSDCRTG). The segment at 86–131 (CGACGRPESIELVVVCDACERGFHMSCVNDGVEAAPSADWMCSDCR) adopts an RING-type 1; degenerate zinc-finger fold. The 70-residue stretch at 258–327 (RHFISERHGV…MDAEIRNENS (70 aa)) folds into the MBD domain. An FYR N-terminal domain is found at 403 to 456 (GCPMQFEDFFVLSLGRIDIRQSYHNVNVIYPIGYKSCWHDKITGSLFTCEVSDG). A coiled-coil region spans residues 491 to 511 (EQNSDKLSNRRDSTQERDDDA). The region spanning 550–698 (SSRVDFDKNL…ESCTNYRTLK (149 aa)) is the FYR C-terminal domain. 3 consecutive short sequence motifs (nuclear localization signal) follow at residues 914-921 (SRRGRKKD), 1124-1131 (KKRTYISV), and 1256-1263 (YRKLECLS). A Pumilio repeat occupies 1098–1137 (PTKKAVLSLLADIRGGDLVQRSIKGTKKRTYISVSDVIMK). The region spanning 1130–1245 (SVSDVIMKKC…EKFKSLYEAE (116 aa)) is the Bromo domain. A coiled-coil region spans residues 1251–1273 (QKLKDYRKLECLSAEMKKEIKDI). The PHD-type 2 zinc finger occupies 1287 to 1337 (EGVCKVCGVDKDDDSVLLCDTCDAEYHTYCLNPPLIRIPDGNWYCPSCVIA). The RING-type 2; degenerate zinc-finger motif lies at 1290–1335 (CKVCGVDKDDDSVLLCDTCDAEYHTYCLNPPLIRIPDGNWYCPSCV). Positions 1337–1344 (AKRMAQEA) match the Nuclear localization signal motif. Residues 1410-1437 (QHLEQCAEAIIEMQQKLRSLSSEWKNAK) are a coiled coil. Disordered stretches follow at residues 1472–1553 (GCDP…NLPE) and 1565–1595 (GRNHETHSPNSNAVELPTAHDASSQASQELQ). Composition is skewed to polar residues over residues 1492-1513 (SSTAYLNKNQGKSPLETDTQPG), 1523-1532 (KISSPETISS), and 1585-1595 (DASSQASQELQ). A coiled-coil region spans residues 1588-1628 (SQASQELQACQQDLSATSNEIQNLQQSIRSIESQLLKQSIR). The Nuclear localization signal signature appears at 1761–1768 (EKRYGPCI). The tract at residues 2136–2176 (IDETKPIISLPDQKSQPVSDSQERSSRVRRSGKKRKEPEGS) is disordered.

Interacts with histone H4. As to expression, expressed in leaves, buds, flowers and stems.

The protein localises to the nucleus. The catalysed reaction is L-lysyl-[protein] + acetyl-CoA = N(6)-acetyl-L-lysyl-[protein] + CoA + H(+). Probable transcriptional regulator that acts as a histone acetyltransferase. Mediates the acetylation of histone H3 and H4 of target loci (e.g. FLC). Involved in an auxin-independent regulation of shoot branching and flowering time. This Arabidopsis thaliana (Mouse-ear cress) protein is Methyl-CpG-binding domain-containing protein 9 (MBD9).